The chain runs to 344 residues: Dihydroorotase (344 aa).

His13 and His15 together coordinate Zn(2+). Residues His15–Arg17 and Asn41 each bind substrate. Zn(2+) contacts are provided by Lys98, His135, and His173. N6-carboxylysine is present on Lys98. His135 provides a ligand contact to substrate. Leu218 contacts substrate. Asp247 is a Zn(2+) binding site. The active site involves Asp247. The substrate site is built by His251 and Ala263.

It belongs to the metallo-dependent hydrolases superfamily. DHOase family. Class II DHOase subfamily. Homodimer. The cofactor is Zn(2+).

It catalyses the reaction (S)-dihydroorotate + H2O = N-carbamoyl-L-aspartate + H(+). The protein operates within pyrimidine metabolism; UMP biosynthesis via de novo pathway; (S)-dihydroorotate from bicarbonate: step 3/3. Catalyzes the reversible cyclization of carbamoyl aspartate to dihydroorotate. This Neisseria gonorrhoeae (strain NCCP11945) protein is Dihydroorotase.